We begin with the raw amino-acid sequence, 261 residues long: Kallikrein 1-related peptidase b1 (261 aa).

Positions 1-18 (MWFLILFLALSLGGIDAA) are cleaved as a signal peptide. The propeptide at 19-24 (PPVQSR) is activation peptide. The Peptidase S1 domain maps to 25-258 (IVGGFKCEKN…FTSWIKDTLA (234 aa)). Cystine bridges form between cysteine 31/cysteine 173, cysteine 50/cysteine 66, cysteine 152/cysteine 219, cysteine 184/cysteine 198, and cysteine 209/cysteine 234. The Charge relay system role is filled by histidine 65. Residue asparagine 102 is glycosylated (N-linked (GlcNAc...) asparagine). Aspartate 120 (charge relay system) is an active-site residue. The active-site Charge relay system is serine 213.

The protein belongs to the peptidase S1 family. Kallikrein subfamily.

It carries out the reaction Preferential cleavage of Arg-|-Xaa bonds in small molecule substrates. Highly selective action to release kallidin (lysyl-bradykinin) from kininogen involves hydrolysis of Met-|-Xaa or Leu-|-Xaa.. Its function is as follows. Glandular kallikreins cleave Met-Lys and Arg-Ser bonds in kininogen to release Lys-bradykinin. In Mus musculus (Mouse), this protein is Kallikrein 1-related peptidase b1 (Klk1b1).